The following is a 372-amino-acid chain: MAESKRPRVFFDIQIGQQQTGRIAFELFNDVVPKTAENFRALCTGEKGMGKQGKPLHFKGSIFHRVIKQFMIQGGDFTAFNGTGGESIYGEKFPDENFELKHDRPFLLSMANSGPGTNGSQFFITTVPTPHLDGKHVVFGEVINGKSVVRKIENMPTQADKPTTDVTIAECGELTGEDYDNADKQTPDATGDPYEDFPDDHQGEELSAPVCFKIASELKNFGNTAFKNGNIALGLEKYQKGLRYLNEFPEPEENDPKDLEPQMKSLRFTLHSNSSLLANKLGQFKNGKTWATYALDVADAASAKDADRAKVYYRRAVAESGLKEEDEALKDLEQASTLAPSDAAIAAETARVKKAIKAREAQEKATARKFFS.

The 164-residue stretch at 10-173 folds into the PPIase cyclophilin-type domain; the sequence is FFDIQIGQQQ…TDVTIAECGE (164 aa). The disordered stretch occupies residues 174 to 193; the sequence is LTGEDYDNADKQTPDATGDP. 3 TPR repeats span residues 215 to 248, 268 to 304, and 309 to 342; these read ASEL…LNEF, FTLH…ASAK, and AKVY…APSD.

It belongs to the cyclophilin-type PPIase family. PPIase D subfamily.

It localises to the cytoplasm. It carries out the reaction [protein]-peptidylproline (omega=180) = [protein]-peptidylproline (omega=0). Functionally, PPIases accelerate the folding of proteins. It catalyzes the cis-trans isomerization of proline imidic peptide bonds in oligopeptides. The protein is Peptidyl-prolyl cis-trans isomerase D (cpr6) of Emericella nidulans (strain FGSC A4 / ATCC 38163 / CBS 112.46 / NRRL 194 / M139) (Aspergillus nidulans).